Reading from the N-terminus, the 1142-residue chain is Potassium channel subfamily T member 2 (1142 aa).

Topologically, residues 1–63 are cytoplasmic; it reads MVDLESEVPP…KNQRSSLRIR (63 aa). The helical transmembrane segment at 64–84 threads the bilayer; the sequence is LFNFSLKLLSCLLYIIRVLLE. Over 85 to 101 the chain is Extracellular; that stretch reads KPSQGNDWSHIFWVNRS. The N-linked (GlcNAc...) asparagine glycan is linked to Asn99. A helical transmembrane segment spans residues 102 to 122; that stretch reads LPLWGLQVSVALISLFETILL. Residues 123 to 137 lie on the Cytoplasmic side of the membrane; the sequence is GYLSYKGNIWEQILR. Residues 138-158 form a helical membrane-spanning segment; the sequence is VPFILEIINAVPFIISIFWPT. At 159 to 160 the chain is on the extracellular side; it reads LR. The chain crosses the membrane as a helical span at residues 161-173; it reads NLFVPVFLNCWLA. Over 174 to 198 the chain is Cytoplasmic; that stretch reads KHALENMINDLHRAIQRTQSAMFNQ. Residues 199–219 form a helical membrane-spanning segment; the sequence is VLILISTLLCLIFTCICGIQH. The Extracellular portion of the chain corresponds to 220–228; the sequence is LERIGKKLN. An intramembrane region (pore-forming) is located at residues 229-249; it reads LFDSLYFCIVTFSTVGFGDVT. The Extracellular segment spans residues 250–256; that stretch reads PETWSSK. The helical transmembrane segment at 257-277 threads the bilayer; it reads LFVVAMICVALVVLPIQFEQL. The Cytoplasmic portion of the chain corresponds to 278 to 1142; that stretch reads AYLWMERQKS…VQDSREETQL (865 aa). 2 consecutive RCK N-terminal domains span residues 299–435 and 725–865; these read EKHV…DHVV and NKLI…CYSL. Disordered stretches follow at residues 989-1044 and 1118-1142; these read DTKD…EKIT and PNSE…ETQL. Over residues 1017–1037 the composition is skewed to basic residues; sequence LRRKSMQWARRLSRKGPKHSG. A compositionally biased stretch (polar residues) spans 1118–1129; that stretch reads PNSEPSRKNSIC.

Belongs to the potassium channel family. Calcium-activated (TC 1.A.1.3) subfamily. KCa4.2/KCNT2 sub-subfamily. Homotetramer. Forms heteromer with KCNT1; heteromeric channels differ from those of homomeric channels in their unitary conductance, kinetic behavior, subcellular localization, and response to activation of protein kinase C. Phosphorylated by protein kinase C. Phosphorylation of the C-terminal domain inhibits channel activity. Detected in brain, and at low levels in heart. Detected in brainstem, including auditory neurons such as the medial nucleus of the trapezoid body. Detected in the olfactory bulb, red nucleus, facial nucleus, pontine nucleus, oculomotor nucleus, substantia nigra, deep cerebellar nuclei, vestibular nucleus, and the thalamus. Detected in hippocampal CA1, CA2, and CA3 regions, the dentate gyrus, supraoptic nucleus, hypothalamus, dorsal root ganglion, and cortical layers II, III, and V. Detected in striatum cholinergic interneurons.

It is found in the cell membrane. The catalysed reaction is K(+)(in) = K(+)(out). With respect to regulation, are normally in a closed state unless activated by an increase in intracellular Na(+) and Cl(-). Inhibited upon stimulation of G-protein coupled receptors, such as CHRM1 and GRM1. There is conflicting data about the effect of ATP on KNCT2 channels activity. Intracellular ATP was initially report to inhibit the channel activity. However, others studies conclude that KNCT2 channels are not inhibited by intracellular ATP. Sodium-activated and chloride-activated potassium channel. Produces rapidly activating outward rectifier K(+) currents. Contributes to regulate neuronal excitability. In Rattus norvegicus (Rat), this protein is Potassium channel subfamily T member 2 (Kcnt2).